A 358-amino-acid chain; its full sequence is Methionine aminopeptidase 2 (358 aa).

Residue His109 coordinates substrate. A divalent metal cation is bound by residues Asp130, Asp141, and His210. His218 serves as a coordination point for substrate. A divalent metal cation-binding residues include Glu243 and Glu339.

The protein belongs to the peptidase M24A family. Methionine aminopeptidase eukaryotic type 2 subfamily. The cofactor is Co(2+). It depends on Zn(2+) as a cofactor. Requires Mn(2+) as cofactor. Fe(2+) is required as a cofactor.

The protein localises to the cytoplasm. It catalyses the reaction Release of N-terminal amino acids, preferentially methionine, from peptides and arylamides.. With respect to regulation, irreversibly inhibited by the fungal metabolite fumagillin and the fumagillin analog TNP470, antiangiogenic drugs. Functionally, cotranslationally removes the N-terminal methionine from nascent proteins. The N-terminal methionine is often cleaved when the second residue in the primary sequence is small and uncharged (Met-Ala-, Cys, Gly, Pro, Ser, Thr, or Val). The polypeptide is Methionine aminopeptidase 2 (Encephalitozoon hellem (strain ATCC 50504) (Microsporidian parasite)).